Reading from the N-terminus, the 181-residue chain is uncharacterized protein (181 aa).

The 178-residue stretch at M1 to L178 folds into the Macro domain.

This is an uncharacterized protein from Sulfolobus acidocaldarius (strain ATCC 33909 / DSM 639 / JCM 8929 / NBRC 15157 / NCIMB 11770).